Consider the following 401-residue polypeptide: Deoxyhypusine synthase-like protein (401 aa).

This sequence belongs to the deoxyhypusine synthase family.

The chain is Deoxyhypusine synthase-like protein from Thermosynechococcus vestitus (strain NIES-2133 / IAM M-273 / BP-1).